The chain runs to 135 residues: Large ribosomal subunit protein uL18c (135 aa).

The protein belongs to the universal ribosomal protein uL18 family. Part of the 50S ribosomal subunit; contacts the 5S rRNA.

Its subcellular location is the plastid. It is found in the chloroplast. Functionally, binds 5S rRNA, forms part of the central protuberance of the 50S subunit. This chain is Large ribosomal subunit protein uL18c (rpl18), found in Phaeodactylum tricornutum (strain CCAP 1055/1).